Reading from the N-terminus, the 481-residue chain is Surface lipoprotein assembly modifier 2 (481 aa).

The signal sequence occupies residues methionine 1–alanine 24. An N-terminal domain region spans residues alanine 24–asparagine 192. Positions glutamine 193–phenylalanine 481 are C-terminal probable beta barrel. Transmembrane regions (beta stranded) follow at residues tryptophan 194–asparagine 204, alanine 223–proline 243, phenylalanine 248–asparagine 257, threonine 271–glutamine 281, valine 285–lysine 295, leucine 315–leucine 325, tryptophan 329–glutamate 339, tyrosine 353–proline 363, phenylalanine 368–arginine 377, lysine 390–aspartate 399, isoleucine 404–asparagine 414, tyrosine 432–arginine 441, leucine 448–lysine 458, and asparagine 471–phenylalanine 481.

It belongs to the Slam family.

It is found in the cell outer membrane. Its function is as follows. Required for correct export to the cell surface of some cell outer membrane lipoproteins. This Haemophilus influenzae (strain ATCC 51907 / DSM 11121 / KW20 / Rd) protein is Surface lipoprotein assembly modifier 2.